A 387-amino-acid polypeptide reads, in one-letter code: Pepsin A (387 aa).

The signal sequence occupies residues 1–15 (MKWLLLLSLVALSEC). A propeptide spans 16–61 (LYKVSLIKKKSLRKNLIEHGLLKDFLKNNTLDPASKYFPQGEAATM) (activation peptide). The Peptidase A1 domain occupies 75–384 (YFGTIGIGTP…DRANNQVGLA (310 aa)). Residue aspartate 93 is part of the active site. A disulfide bond links cysteine 106 and cysteine 111. Serine 129 bears the Phosphoserine mark. An intrachain disulfide couples cysteine 267 to cysteine 271. The active site involves aspartate 276. A disulfide bond links cysteine 310 and cysteine 343.

It belongs to the peptidase A1 family.

It is found in the secreted. It catalyses the reaction Preferential cleavage: hydrophobic, preferably aromatic, residues in P1 and P1' positions. Cleaves 1-Phe-|-Val-2, 4-Gln-|-His-5, 13-Glu-|-Ala-14, 14-Ala-|-Leu-15, 15-Leu-|-Tyr-16, 16-Tyr-|-Leu-17, 23-Gly-|-Phe-24, 24-Phe-|-Phe-25 and 25-Phe-|-Tyr-26 bonds in the B chain of insulin.. Its activity is regulated as follows. Inhibited by pepstatin. Functionally, shows particularly broad specificity; although bonds involving phenylalanine and leucine are preferred, many others are also cleaved to some extent. The protein is Pepsin A (PGA) of Callithrix jacchus (White-tufted-ear marmoset).